The following is a 163-amino-acid chain: Endoribonuclease YbeY (163 aa).

Residues histidine 123, histidine 127, and histidine 133 each contribute to the Zn(2+) site.

The protein belongs to the endoribonuclease YbeY family. Zn(2+) is required as a cofactor.

It localises to the cytoplasm. Functionally, single strand-specific metallo-endoribonuclease involved in late-stage 70S ribosome quality control and in maturation of the 3' terminus of the 16S rRNA. This Helicobacter hepaticus (strain ATCC 51449 / 3B1) protein is Endoribonuclease YbeY.